A 40-amino-acid polypeptide reads, in one-letter code: Photosystem II reaction center protein J (40 aa).

Residues 8–28 (IPLWLVGTVTGTLVIGLMGIF) traverse the membrane as a helical segment.

This sequence belongs to the PsbJ family. As to quaternary structure, PSII is composed of 1 copy each of membrane proteins PsbA, PsbB, PsbC, PsbD, PsbE, PsbF, PsbH, PsbI, PsbJ, PsbK, PsbL, PsbM, PsbT, PsbX, PsbY, PsbZ, Psb30/Ycf12, at least 3 peripheral proteins of the oxygen-evolving complex and a large number of cofactors. It forms dimeric complexes.

Its subcellular location is the plastid. The protein localises to the chloroplast thylakoid membrane. Functionally, one of the components of the core complex of photosystem II (PSII). PSII is a light-driven water:plastoquinone oxidoreductase that uses light energy to abstract electrons from H(2)O, generating O(2) and a proton gradient subsequently used for ATP formation. It consists of a core antenna complex that captures photons, and an electron transfer chain that converts photonic excitation into a charge separation. The sequence is that of Photosystem II reaction center protein J from Psilotum nudum (Whisk fern).